Reading from the N-terminus, the 214-residue chain is Holliday junction branch migration complex subunit RuvA (214 aa).

The interval 1 to 63 is domain I; that stretch reads MISSLRGTVL…EDSLTLFGFP (63 aa). A domain II region spans residues 64–139; that stretch reads GPDELRAFEL…KLFVTQPRTR (76 aa). The flexible linker stretch occupies residues 139–143; that stretch reads RSASS. The interval 144–214 is domain III; that stretch reads AASTVTADVV…APAAAQAADR (71 aa).

It belongs to the RuvA family. Homotetramer. Forms an RuvA(8)-RuvB(12)-Holliday junction (HJ) complex. HJ DNA is sandwiched between 2 RuvA tetramers; dsDNA enters through RuvA and exits via RuvB. An RuvB hexamer assembles on each DNA strand where it exits the tetramer. Each RuvB hexamer is contacted by two RuvA subunits (via domain III) on 2 adjacent RuvB subunits; this complex drives branch migration. In the full resolvosome a probable DNA-RuvA(4)-RuvB(12)-RuvC(2) complex forms which resolves the HJ.

Its subcellular location is the cytoplasm. Functionally, the RuvA-RuvB-RuvC complex processes Holliday junction (HJ) DNA during genetic recombination and DNA repair, while the RuvA-RuvB complex plays an important role in the rescue of blocked DNA replication forks via replication fork reversal (RFR). RuvA specifically binds to HJ cruciform DNA, conferring on it an open structure. The RuvB hexamer acts as an ATP-dependent pump, pulling dsDNA into and through the RuvAB complex. HJ branch migration allows RuvC to scan DNA until it finds its consensus sequence, where it cleaves and resolves the cruciform DNA. This is Holliday junction branch migration complex subunit RuvA from Clavibacter sepedonicus (Clavibacter michiganensis subsp. sepedonicus).